The chain runs to 183 residues: Ribulose bisphosphate carboxylase small subunit, chloroplastic 3 (183 aa).

Residues methionine 1–glutamine 57 constitute a chloroplast transit peptide.

Belongs to the RuBisCO small chain family. Heterohexadecamer of 8 large and 8 small subunits.

The protein localises to the plastid. It localises to the chloroplast. RuBisCO catalyzes two reactions: the carboxylation of D-ribulose 1,5-bisphosphate, the primary event in carbon dioxide fixation, as well as the oxidative fragmentation of the pentose substrate. Both reactions occur simultaneously and in competition at the same active site. Although the small subunit is not catalytic it is essential for maximal activity. The polypeptide is Ribulose bisphosphate carboxylase small subunit, chloroplastic 3 (Mesembryanthemum crystallinum (Common ice plant)).